A 177-amino-acid polypeptide reads, in one-letter code: Large ribosomal subunit protein uL6 (177 aa).

This sequence belongs to the universal ribosomal protein uL6 family. As to quaternary structure, part of the 50S ribosomal subunit.

Functionally, this protein binds to the 23S rRNA, and is important in its secondary structure. It is located near the subunit interface in the base of the L7/L12 stalk, and near the tRNA binding site of the peptidyltransferase center. The chain is Large ribosomal subunit protein uL6 from Xanthobacter autotrophicus (strain ATCC BAA-1158 / Py2).